Here is a 321-residue protein sequence, read N- to C-terminus: Cytochrome c biogenesis protein CcsA (321 aa).

Transmembrane regions (helical) follow at residues 9-29 (ILTH…LITL), 44-64 (GMIA…ASSG), 68-88 (LSNL…LHMI), 143-163 (MLLS…LLMI), 226-246 (VISL…VWAN), 260-274 (TWAF…IYLH), and 289-309 (VASI…LLGI).

This sequence belongs to the CcmF/CycK/Ccl1/NrfE/CcsA family. In terms of assembly, may interact with Ccs1.

It is found in the plastid. Its subcellular location is the chloroplast thylakoid membrane. In terms of biological role, required during biogenesis of c-type cytochromes (cytochrome c6 and cytochrome f) at the step of heme attachment. This is Cytochrome c biogenesis protein CcsA from Oryza sativa (Rice).